The following is an 84-amino-acid chain: Small ribosomal subunit protein uS17 (84 aa).

The protein belongs to the universal ribosomal protein uS17 family. In terms of assembly, part of the 30S ribosomal subunit.

Functionally, one of the primary rRNA binding proteins, it binds specifically to the 5'-end of 16S ribosomal RNA. The polypeptide is Small ribosomal subunit protein uS17 (Aliivibrio fischeri (strain ATCC 700601 / ES114) (Vibrio fischeri)).